A 730-amino-acid chain; its full sequence is Multifunctional procollagen lysine hydroxylase and glycosyltransferase (730 aa).

Positions 1–16 are cleaved as a signal peptide; that stretch reads MRVLPFLLPLIPVLLA. A required for glycosyltransferase activity region spans residues 20-280; that stretch reads TDLPELVVVT…CGLEVKESEE (261 aa). Residues 30–32 and 98–100 each bind UDP; these read VAT and DAY. Mn(2+)-binding residues include aspartate 98, aspartate 101, and histidine 242. A UDP-binding site is contributed by 245–248; it reads GPSK. Cysteine 268 and cysteine 271 are oxidised to a cystine. The accessory region stretch occupies residues 281 to 507; sequence VPLIALNLFI…YYGFLIVSDE (227 aa). A disulfide bond links cysteine 554 and cysteine 690. Positions 590 and 648 each coordinate 2-oxoglutarate. The 92-residue stretch at 639–730 folds into the Fe2OG dioxygenase domain; sequence ESNMMFVVRY…RYIMVSFINP (92 aa). Residues histidine 659 and aspartate 661 each coordinate Fe cation. An important for dimerization region spans residues 664 to 707; sequence TFSIDIALNKKGRDYEGGGVRYIRYNCTVPADEVGYAMMFPGRL. An N-linked (GlcNAc...) asparagine glycan is attached at asparagine 689. Histidine 711 is a Fe cation binding site. Residue arginine 721 coordinates 2-oxoglutarate.

In terms of assembly, homodimer. Fe(2+) serves as cofactor. Requires L-ascorbate as cofactor. The cofactor is Mn(2+).

It localises to the rough endoplasmic reticulum. It is found in the endoplasmic reticulum lumen. The protein resides in the endoplasmic reticulum membrane. The protein localises to the secreted. Its subcellular location is the extracellular space. It catalyses the reaction L-lysyl-[collagen] + 2-oxoglutarate + O2 = (5R)-5-hydroxy-L-lysyl-[collagen] + succinate + CO2. It carries out the reaction (5R)-5-hydroxy-L-lysyl-[collagen] + UDP-alpha-D-galactose = (5R)-5-O-(beta-D-galactosyl)-5-hydroxy-L-lysyl-[collagen] + UDP + H(+). The enzyme catalyses (5R)-5-O-(beta-D-galactosyl)-5-hydroxy-L-lysyl-[collagen] + UDP-alpha-D-glucose = (5R)-5-O-[alpha-D-glucosyl-(1-&gt;2)-beta-D-galactosyl]-5-hydroxy-L-lysyl-[collagen] + UDP + H(+). In terms of biological role, multifunctional enzyme that catalyzes a series of post-translational modifications on Lys residues in procollagen. Catalyzes the formation of hydroxylysine residues in -Xaa-Lys-Gly- sequences in type IV collagens. Transfers galactose onto hydroxylysine groups, giving rise to galactosyl 5-hydroxylysine. Catalyzes the subsequent transfer of glucose moieties, giving rise to 1,2-glucosylgalactosyl-5-hydroxylysine residues. Essential for normal biosynthesis and secretion of type IV collagens. Essential for normal stability of the basement membrane. The chain is Multifunctional procollagen lysine hydroxylase and glycosyltransferase (let-268) from Caenorhabditis elegans.